We begin with the raw amino-acid sequence, 215 residues long: MSKVYDWFEERLEIQAIADDITSKYVPPHVNIFYCLGGITLTCFLVQVATGFAMTFYYRPTVTEAFASVQYIMTEANFGWLIRSVHRWSASMMVLMMILHVFRVYLTGGFKKPRELTWVTGVVLAVLTASFGVTGYSLPWDQIGYWAVKIVTGVPEAIPVIGSPLVELLRGSASVGQSTLTRFYSLHTFVLPLLTAVFMLMHFLMIRKQGISGPL.

Residues 32–52 (IFYCLGGITLTCFLVQVATGF) traverse the membrane as a helical segment. Heme c is bound at residue Cys35. The heme b site is built by His86 and His100. 3 consecutive transmembrane segments (helical) span residues 90–110 (ASMMVLMMILHVFRVYLTGGF), 116–136 (LTWVTGVVLAVLTASFGVTGY), and 186–206 (LHTFVLPLLTAVFMLMHFLMI). Residues His187 and His202 each contribute to the heme b site.

It belongs to the cytochrome b family. PetB subfamily. The 4 large subunits of the cytochrome b6-f complex are cytochrome b6, subunit IV (17 kDa polypeptide, PetD), cytochrome f and the Rieske protein, while the 4 small subunits are PetG, PetL, PetM and PetN. The complex functions as a dimer. Requires heme b as cofactor. Heme c serves as cofactor.

The protein localises to the plastid. Its subcellular location is the chloroplast thylakoid membrane. In terms of biological role, component of the cytochrome b6-f complex, which mediates electron transfer between photosystem II (PSII) and photosystem I (PSI), cyclic electron flow around PSI, and state transitions. This Eucalyptus globulus subsp. globulus (Tasmanian blue gum) protein is Cytochrome b6.